The following is a 340-amino-acid chain: 4-hydroxythreonine-4-phosphate dehydrogenase (340 aa).

The substrate site is built by histidine 141 and threonine 142. Residues histidine 177, histidine 222, and histidine 277 each contribute to the a divalent metal cation site. Lysine 285, asparagine 294, and arginine 303 together coordinate substrate.

Belongs to the PdxA family. As to quaternary structure, homodimer. Zn(2+) serves as cofactor. Mg(2+) is required as a cofactor. It depends on Co(2+) as a cofactor.

Its subcellular location is the cytoplasm. It carries out the reaction 4-(phosphooxy)-L-threonine + NAD(+) = 3-amino-2-oxopropyl phosphate + CO2 + NADH. Its pathway is cofactor biosynthesis; pyridoxine 5'-phosphate biosynthesis; pyridoxine 5'-phosphate from D-erythrose 4-phosphate: step 4/5. Functionally, catalyzes the NAD(P)-dependent oxidation of 4-(phosphooxy)-L-threonine (HTP) into 2-amino-3-oxo-4-(phosphooxy)butyric acid which spontaneously decarboxylates to form 3-amino-2-oxopropyl phosphate (AHAP). The sequence is that of 4-hydroxythreonine-4-phosphate dehydrogenase from Maricaulis maris (strain MCS10) (Caulobacter maris).